Reading from the N-terminus, the 130-residue chain is Small ribosomal subunit protein uS9 (130 aa).

It belongs to the universal ribosomal protein uS9 family.

The chain is Small ribosomal subunit protein uS9 from Buchnera aphidicola subsp. Acyrthosiphon pisum (strain Tuc7).